A 1041-amino-acid polypeptide reads, in one-letter code: MTDNAYPKLAGGAPDLPALELEVLDYWSRDDTFRASIARRDGAPEYVFYDGPPFANGLPHYGHLLTGYVKDIVPRYRTMRGYKVERRFGWDTHGLPAELEVERQLGITDKSQIEAMGIAAFNDACRASVLRYTDEWQAYVTRQARWVDFDNDYKTLDLAYMESVIWAFKQLWDKGLAYEGYRVLPYCWRDETPLSNHELRMDDDVYQSRQDPAVTVGFKVVGGQPDNGLDGAYLLVWTTTPWTLPSNLAVAVSPDITYVQVQAGDRRFVLAEARLAAYARELGEEPVVLGTYRGAELLGTRYLPPFAYFMDWPNAFQVLAGDFVTTDDGTGIVHMAPAYGEDDMVVAEAVGIAPVTPVDSKGRFDVTVADYQGQHVFDANAQIVRDLKTQSGPAAVNGPVLIRHETYEHPYPHCWRCRNPLIYRSVSSWFVRVTDFRDRMVELNQQITWYPEHVKDGQFGKWLQGARDWSISRNRYWGTPIPVWKSDDPAYPRIDVYGSLDELERDFGVRPANLHRPYIDELTRPNPDDPTGRSTMRRIPDVLDVWFDSGSMPYAQVHYPFENLDWFQGHYPGDFIVEYIGQTRGWFYTLHVLATALFDRPAFKTCVAHGIVLGFDGQKMSKSLRNYPDVTEVFDRDGSDAMRWFLMASPILRGGNLIVTEQGIRDGVRQVLLPLWNTYSFLALYAPKVGTWRVDSVHVLDRYILAKLAVLRDDLSESMEVYDIPGACEHLRQFTEALTNWYVRRSRSRFWAEDADAIDTLHTVLEVTTRLAAPLLPLITEIIWRGLTRERSVHLTDWPAPDLLPSDADLVAAMDQVRDVCSAASSLRKAKKLRVRLPLPKLIVAVENPQLLRPFVDLIGDELNVKQVELTDAIDTYGRFELTVNARVAGPRLGKDVQAAIKAVKAGDGVINPDGTLLAGPAVLTPDEYNSRLVAADPESTAALPDGAGLVVLDGTVTAELEAEGWAKDRIRELQELRKSTGLDVSDRIRVVMSVPAEREDWARTHRDLIAGEILATDFEFADLADGVAIGDGVRVSIEKT.

Positions Pro53–His63 match the 'HIGH' region motif. Positions Lys619–Ser623 match the 'KMSKS' region motif. Lys622 serves as a coordination point for ATP.

It belongs to the class-I aminoacyl-tRNA synthetase family. IleS type 2 subfamily. Monomer. Requires Zn(2+) as cofactor.

It localises to the cytoplasm. The catalysed reaction is tRNA(Ile) + L-isoleucine + ATP = L-isoleucyl-tRNA(Ile) + AMP + diphosphate. Its function is as follows. Catalyzes the attachment of isoleucine to tRNA(Ile). As IleRS can inadvertently accommodate and process structurally similar amino acids such as valine, to avoid such errors it has two additional distinct tRNA(Ile)-dependent editing activities. One activity is designated as 'pretransfer' editing and involves the hydrolysis of activated Val-AMP. The other activity is designated 'posttransfer' editing and involves deacylation of mischarged Val-tRNA(Ile). In Mycobacterium tuberculosis (strain CDC 1551 / Oshkosh), this protein is Isoleucine--tRNA ligase (ileS).